The following is a 464-amino-acid chain: Fumarate hydratase class II (464 aa).

Substrate is bound by residues 96–98 (SGT), 127–130 (HPND), 137–139 (SSN), and Thr185. The Proton donor/acceptor role is filled by His186. Ser316 is an active-site residue. Substrate contacts are provided by residues Ser317 and 322-324 (KVN).

Belongs to the class-II fumarase/aspartase family. Fumarase subfamily. Homotetramer.

It is found in the cytoplasm. It catalyses the reaction (S)-malate = fumarate + H2O. It functions in the pathway carbohydrate metabolism; tricarboxylic acid cycle; (S)-malate from fumarate: step 1/1. Involved in the TCA cycle. Catalyzes the stereospecific interconversion of fumarate to L-malate. This is Fumarate hydratase class II from Pseudomonas syringae pv. tomato (strain ATCC BAA-871 / DC3000).